The primary structure comprises 307 residues: Ribonuclease Z (307 aa).

7 residues coordinate Zn(2+): His63, His65, Asp67, His68, His140, Asp211, and His269. The Proton acceptor role is filled by Asp67.

This sequence belongs to the RNase Z family. As to quaternary structure, homodimer. Zn(2+) is required as a cofactor.

The catalysed reaction is Endonucleolytic cleavage of RNA, removing extra 3' nucleotides from tRNA precursor, generating 3' termini of tRNAs. A 3'-hydroxy group is left at the tRNA terminus and a 5'-phosphoryl group is left at the trailer molecule.. Functionally, zinc phosphodiesterase, which displays some tRNA 3'-processing endonuclease activity. Probably involved in tRNA maturation, by removing a 3'-trailer from precursor tRNA. The polypeptide is Ribonuclease Z (Bacillus licheniformis (strain ATCC 14580 / DSM 13 / JCM 2505 / CCUG 7422 / NBRC 12200 / NCIMB 9375 / NCTC 10341 / NRRL NRS-1264 / Gibson 46)).